A 373-amino-acid polypeptide reads, in one-letter code: Probable pectin lyase C (373 aa).

Residues 1-17 (MKKYLLSLLAAVTYTTA) form the signal peptide. 2 disulfide bridges follow: C78/C95 and C87/C215. N-linked (GlcNAc...) asparagine glycans are attached at residues N140 and N229. The active site involves R245. A disulfide bridge connects residues C315 and C323.

Belongs to the polysaccharide lyase 1 family.

Its subcellular location is the secreted. The catalysed reaction is Eliminative cleavage of (1-&gt;4)-alpha-D-galacturonan methyl ester to give oligosaccharides with 4-deoxy-6-O-methyl-alpha-D-galact-4-enuronosyl groups at their non-reducing ends.. Its function is as follows. Pectinolytic enzymes consist of four classes of enzymes: pectin lyase, polygalacturonase, pectin methylesterase and rhamnogalacturonase. Among pectinolytic enzymes, pectin lyase is the most important in depolymerization of pectin, since it cleaves internal glycosidic bonds of highly methylated pectins. The polypeptide is Probable pectin lyase C (pelC) (Emericella nidulans (strain FGSC A4 / ATCC 38163 / CBS 112.46 / NRRL 194 / M139) (Aspergillus nidulans)).